Consider the following 122-residue polypeptide: Probable transcription factor PqrA (122 aa).

Residues 7 to 107 (NDILKWLETQ…NTTPAKFREN (101 aa)) enclose the HTH araC/xylS-type domain. DNA-binding regions (H-T-H motif) lie at residues 26 to 47 (DTIANKSGYSKWHLQRIFKDFK) and 74 to 97 (ILDIALMYGFSSQATFTRIFKKHF).

In terms of biological role, upon expression in E.coli strain KY2563 confers resistance to antibiotics ofloxacin, ciprofloxacin, tetracycline, chloramphenicol, and ceftazidime (increases minimal inhibitory concentration by 8-32 times); also decreases expression of OmpF. The protein is Probable transcription factor PqrA of Proteus vulgaris.